The following is a 224-amino-acid chain: Ribonuclease 3 (224 aa).

The region spanning 4 to 127 is the RNase III domain; that stretch reads IEKLERSLTY…IIGAIHLEAG (124 aa). Glu-40 provides a ligand contact to Mg(2+). Residue Asp-44 is part of the active site. 2 residues coordinate Mg(2+): Asp-113 and Glu-116. The active site involves Glu-116. A DRBM domain is found at 154-223; it reads DYKTKLQEIT…AKIALEKLGA (70 aa).

Belongs to the ribonuclease III family. As to quaternary structure, homodimer. It depends on Mg(2+) as a cofactor.

It localises to the cytoplasm. The catalysed reaction is Endonucleolytic cleavage to 5'-phosphomonoester.. Functionally, digests double-stranded RNA. Involved in the processing of primary rRNA transcript to yield the immediate precursors to the large and small rRNAs (23S and 16S). Processes some mRNAs, and tRNAs when they are encoded in the rRNA operon. Processes pre-crRNA and tracrRNA of type II CRISPR loci if present in the organism. The protein is Ribonuclease 3 of Campylobacter jejuni (strain RM1221).